A 311-amino-acid chain; its full sequence is Malate dehydrogenase (311 aa).

NAD(+) is bound by residues 7 to 13 (GAAGGIG) and D34. Residues R81 and R87 each coordinate substrate. Residues N94 and 117–119 (ITN) contribute to the NAD(+) site. The substrate site is built by N119 and R153. The Proton acceptor role is filled by H177. M227 serves as a coordination point for NAD(+).

The protein belongs to the LDH/MDH superfamily. MDH type 1 family. Homodimer.

The enzyme catalyses (S)-malate + NAD(+) = oxaloacetate + NADH + H(+). Its function is as follows. Catalyzes the reversible oxidation of malate to oxaloacetate. In Vibrio campbellii (strain ATCC BAA-1116), this protein is Malate dehydrogenase.